The sequence spans 447 residues: GTPase Der (447 aa).

2 EngA-type G domains span residues 4–165 (QIIA…PKEK) and 180–357 (VQIV…KNWN). GTP contacts are provided by residues 10 to 17 (GRPNVGKS), 57 to 61 (DTPGL), 119 to 122 (NKCE), 186 to 193 (GRPNAGKS), 233 to 237 (DTAGL), and 298 to 301 (NKWD). In terms of domain architecture, KH-like spans 358 to 443 (KKITTSKLNE…PIRFAYVKTK (86 aa)).

Belongs to the TRAFAC class TrmE-Era-EngA-EngB-Septin-like GTPase superfamily. EngA (Der) GTPase family. As to quaternary structure, associates with the 50S ribosomal subunit.

GTPase that plays an essential role in the late steps of ribosome biogenesis. The polypeptide is GTPase Der (Rickettsia canadensis (strain McKiel)).